The chain runs to 394 residues: uncharacterized protein (394 aa).

This is an uncharacterized protein from Bacillus subtilis (strain 168).